We begin with the raw amino-acid sequence, 414 residues long: Enolase (414 aa).

Gln156 contributes to the (2R)-2-phosphoglycerate binding site. The active-site Proton donor is the Glu200. Positions 236, 281, and 308 each coordinate Mg(2+). Residues Lys333, Arg362, Ser363, and Lys384 each coordinate (2R)-2-phosphoglycerate. The active-site Proton acceptor is the Lys333.

This sequence belongs to the enolase family. The cofactor is Mg(2+).

The protein resides in the cytoplasm. It is found in the secreted. Its subcellular location is the cell surface. It catalyses the reaction (2R)-2-phosphoglycerate = phosphoenolpyruvate + H2O. Its pathway is carbohydrate degradation; glycolysis; pyruvate from D-glyceraldehyde 3-phosphate: step 4/5. Functionally, catalyzes the reversible conversion of 2-phosphoglycerate (2-PG) into phosphoenolpyruvate (PEP). It is essential for the degradation of carbohydrates via glycolysis. In Methanosphaera stadtmanae (strain ATCC 43021 / DSM 3091 / JCM 11832 / MCB-3), this protein is Enolase.